Consider the following 157-residue polypeptide: Xanthine-guanine phosphoribosyltransferase (157 aa).

Residues 42 to 43 and 93 to 101 contribute to the 5-phospho-alpha-D-ribose 1-diphosphate site; these read RG and DDLVDTGNT. Asp94 contacts Mg(2+). Guanine is bound by residues Asp97 and Ile140. Xanthine contacts are provided by Asp97 and Ile140. GMP-binding positions include 97-101 and 139-140; these read DTGNT and WI.

This sequence belongs to the purine/pyrimidine phosphoribosyltransferase family. XGPT subfamily. Homotetramer. The cofactor is Mg(2+).

The protein localises to the cell inner membrane. The enzyme catalyses GMP + diphosphate = guanine + 5-phospho-alpha-D-ribose 1-diphosphate. It carries out the reaction XMP + diphosphate = xanthine + 5-phospho-alpha-D-ribose 1-diphosphate. The catalysed reaction is IMP + diphosphate = hypoxanthine + 5-phospho-alpha-D-ribose 1-diphosphate. It functions in the pathway purine metabolism; GMP biosynthesis via salvage pathway; GMP from guanine: step 1/1. The protein operates within purine metabolism; XMP biosynthesis via salvage pathway; XMP from xanthine: step 1/1. Functionally, purine salvage pathway enzyme that catalyzes the transfer of the ribosyl-5-phosphate group from 5-phospho-alpha-D-ribose 1-diphosphate (PRPP) to the N9 position of the 6-oxopurines guanine and xanthine to form the corresponding ribonucleotides GMP (guanosine 5'-monophosphate) and XMP (xanthosine 5'-monophosphate), with the release of PPi. To a lesser extent, also acts on hypoxanthine. The protein is Xanthine-guanine phosphoribosyltransferase of Actinobacillus pleuropneumoniae serotype 5b (strain L20).